Consider the following 359-residue polypeptide: Dual-specificity RNA methyltransferase RlmN (359 aa).

Catalysis depends on Glu-102, which acts as the Proton acceptor. Positions 108-351 (EKKRATLCIS…IRKNRGSDIQ (244 aa)) constitute a Radical SAM core domain. Cys-115 and Cys-354 form a disulfide bridge. [4Fe-4S] cluster contacts are provided by Cys-122, Cys-126, and Cys-129. S-adenosyl-L-methionine contacts are provided by residues 178 to 179 (GE), Ser-210, 232 to 234 (SLH), and Asn-311. Cys-354 serves as the catalytic S-methylcysteine intermediate.

Belongs to the radical SAM superfamily. RlmN family. [4Fe-4S] cluster serves as cofactor.

Its subcellular location is the cytoplasm. The enzyme catalyses adenosine(2503) in 23S rRNA + 2 reduced [2Fe-2S]-[ferredoxin] + 2 S-adenosyl-L-methionine = 2-methyladenosine(2503) in 23S rRNA + 5'-deoxyadenosine + L-methionine + 2 oxidized [2Fe-2S]-[ferredoxin] + S-adenosyl-L-homocysteine. It catalyses the reaction adenosine(37) in tRNA + 2 reduced [2Fe-2S]-[ferredoxin] + 2 S-adenosyl-L-methionine = 2-methyladenosine(37) in tRNA + 5'-deoxyadenosine + L-methionine + 2 oxidized [2Fe-2S]-[ferredoxin] + S-adenosyl-L-homocysteine. Its function is as follows. Specifically methylates position 2 of adenine 2503 in 23S rRNA and position 2 of adenine 37 in tRNAs. m2A2503 modification seems to play a crucial role in the proofreading step occurring at the peptidyl transferase center and thus would serve to optimize ribosomal fidelity. The sequence is that of Dual-specificity RNA methyltransferase RlmN from Buchnera aphidicola subsp. Cinara cedri (strain Cc).